The primary structure comprises 1454 residues: ABC transporter G family member 43 (1454 aa).

A disordered region spans residues 23–47 (ARSLRDGDDPFRRSAAASRRDAGDD). The span at 25 to 44 (SLRDGDDPFRRSAAASRRDA) shows a compositional bias: basic and acidic residues. An N-linked (GlcNAc...) asparagine glycan is attached at Asn-163. Positions 170–444 (EGLVSLFISS…FESAGFRCPE (275 aa)) constitute an ABC transporter 1 domain. Residue 204 to 211 (GPPSSGKS) coordinates ATP. A glycan (N-linked (GlcNAc...) asparagine) is linked at Asn-393. Residues 524 to 735 (LKAVMSREWL…SNNALSVNEF (212 aa)) form the ABC transmembrane type-2 1 domain. Transmembrane regions (helical) follow at residues 540-560 (FLFI…MTLF), 577-597 (VGAL…ELQL), 613-630 (FFPA…KVPL), 637-656 (LWIV…GRFF), 659-679 (FLAY…LGAI), and 684-704 (VVAN…GGFL). A glycan (N-linked (GlcNAc...) asparagine) is linked at Asn-745. Residues 775 to 795 (IGAMIGFMIVFNILYLCALTF) form a helical membrane-spanning segment. The tract at residues 804–823 (TVVSDDDTKSELEAESNQEQ) is disordered. N-linked (GlcNAc...) asparagine glycosylation is found at Asn-829 and Asn-832. The region spanning 852–1104 (LSFNHMNYYV…ILVEYFEAIP (253 aa)) is the ABC transporter 2 domain. An ATP-binding site is contributed by 897–904 (GVSGAGKT). Asn-951 is a glycosylation site (N-linked (GlcNAc...) asparagine). In terms of domain architecture, ABC transmembrane type-2 2 spans 1178–1391 (QCVANTWKQF…TIYGVIASQF (214 aa)). A run of 7 helical transmembrane segments spans residues 1196 to 1216 (YNAM…TVFW), 1236 to 1256 (YAAV…VVSV), 1284 to 1304 (FCYS…MIGY), 1314 to 1334 (FLFF…MLVA), 1341 to 1361 (LAAV…GFII), 1372 to 1392 (WFYW…SQFA), and 1423 to 1443 (FLGY…FLFG).

Belongs to the ABC transporter superfamily. ABCG family. PDR (TC 3.A.1.205) subfamily. As to expression, specifically expressed in the vasculature of roots, stems, panicles, sheaths and leaves.

The protein localises to the cell membrane. Its function is as follows. ABC transporter modulating cadmium (Cd) import, thus controlling Cd(2+) accumulation to prevent phytotoxicity. Confers high tolerance to Cd in yeast. Prevents leaf bacteria proliferation, such as Xanthomonas oryzae pv. oryzicola (Xoc) RS105 and X.oryzae pv. oryzae (Xoo) PXO99, by triggering Cd accumulation, which in turn impairs bacterial virulence factors. The protein is ABC transporter G family member 43 of Oryza sativa subsp. japonica (Rice).